Consider the following 94-residue polypeptide: Cyclin-dependent kinases regulatory subunit (94 aa).

The protein belongs to the CKS family. As to quaternary structure, forms a homohexamer that can probably bind six kinase subunits. Interacts with cdk-1.

Its subcellular location is the nucleus. Its function is as follows. Binds to the catalytic subunit of the cyclin dependent kinases and is essential for their biological function. Has a role in the exit from M phase during early mitotic cell division. More specifically, thought to act by the degrading B-type cyclins that causes breakdown of nuclear envelope and exit mitosis. This is Cyclin-dependent kinases regulatory subunit from Caenorhabditis briggsae.